The sequence spans 111 residues: Iron-sulfur cluster insertion protein ErpA (111 aa).

Positions 39, 103, and 105 each coordinate iron-sulfur cluster.

The protein belongs to the HesB/IscA family. In terms of assembly, homodimer. Requires iron-sulfur cluster as cofactor.

Functionally, required for insertion of 4Fe-4S clusters for at least IspG. The sequence is that of Iron-sulfur cluster insertion protein ErpA from Buchnera aphidicola subsp. Cinara cedri (strain Cc).